Reading from the N-terminus, the 793-residue chain is E3 ubiquitin-protein ligase UHRF1 (793 aa).

Residues 1–78 (MWIQVRTMDG…IQLLVRQSLV (78 aa)) enclose the Ubiquitin-like domain. Residues Ser76, Ser91, Ser95, and Ser165 each carry the phosphoserine modification. A disordered region spans residues 82–124 (STKERDSELSDTDSGCCLGQSESDKSSTHGEAAAETDSRPADE). Tudor-like regions lie at residues 133 to 209 (GLYK…ARAR) and 216 to 283 (DLEV…IERP). A Glycyl lysine isopeptide (Lys-Gly) (interchain with G-Cter in SUMO2) cross-link involves residue Lys279. The residue at position 287 (Ser287) is a Phosphoserine. Positions 296-301 (RKSGPS) are linker. Ser298 carries the post-translational modification Phosphoserine; by PKA. A PHD-type zinc finger spans residues 310–366 (NRLCRVCACHLCGGRQDPDKQLMCDECDMAFHIYCLDPPLSSVPSEDEWYCPECRND). Histone H3R2me0 binding regions lie at residues 333–337 (CDECD) and 353–355 (PSE). The residue at position 368 (Ser368) is a Phosphoserine. Lys385 is covalently cross-linked (Glycyl lysine isopeptide (Lys-Gly) (interchain with G-Cter in SUMO2)). Lys399 is modified (N6-acetyllysine). In terms of domain architecture, YDG spans 419 to 582 (GPIPGIPVGT…FLVWRYLLRR (164 aa)). A required to promote base flipping region spans residues 445-446 (HV). Residues 463–464 (AG) and Asp469 contribute to the DNA site. Required for formation of a 5-methylcytosine-binding pocket stretches follow at residues 466 to 469 (YEDD) and 478 to 481 (YTGS). Lys546 bears the N6-acetyllysine; alternate mark. Lys546 is covalently cross-linked (Glycyl lysine isopeptide (Lys-Gly) (interchain with G-Cter in SUMO2); alternate). Positions 618–629 (REREKENSKREE) are enriched in basic and acidic residues. Residues 618-673 (REREKENSKREEEEQQEGGFASPRTGKGKWKRKSAGGGPSRAGSPRRTSKKTKVEP) form a disordered region. The residue at position 639 (Ser639) is a Phosphoserine; by CDK1. Ser651 carries the post-translational modification Phosphoserine. Lys670 participates in a covalent cross-link: Glycyl lysine isopeptide (Lys-Gly) (interchain with G-Cter in SUMO2). Phosphoserine occurs at positions 707 and 709. The RING-type zinc-finger motif lies at 724 to 763 (CICCQELVFRPITTVCQHNVCKDCLDRSFRAQVFSCPACR).

In terms of assembly, interacts with DNMT3A and DNMT3B. Interacts with DNMT1; the interaction is direct. Interacts with USP7; leading to its deubiquitination. Interacts with histone H3. Interacts with HDAC1, but not with HDAC2. Interacts with BLTP3A. Interacts with PML. Interacts with EHMT2. Binds hemimethylated CpG containing oligonucleotides. Interacts with ZNF263; recruited to the SIX3 promoter along with other proteins involved in chromatin modification and transcriptional corepression where it contributes to transcriptional repression. Interacts with UHRF2. Interacts with FANCD2. Interacts with TET1 isoform 2; this interaction induces the recruitment of TET1 isoform 2 to replicating heterochromatin. Post-translationally, phosphorylation at Ser-298 of the linker region decreases the binding to H3K9me3. Phosphorylation at Ser-639 by CDK1 during M phase impairs interaction with USP7, preventing deubiquitination and leading to degradation by the proteasome. In terms of processing, ubiquitinated; which leads to proteasomal degradation. Autoubiquitinated; interaction with USP7 leads to deubiquitination and prevents degradation. Ubiquitination and degradation takes place during M phase, when phosphorylation at Ser-639 prevents interaction with USP7 and subsequent deubiquitination. Polyubiquitination may be stimulated by DNA damage. As to expression, expressed in thymus, bone marrow, testis, lung and heart. Overexpressed in breast cancer.

It is found in the nucleus. It carries out the reaction S-ubiquitinyl-[E2 ubiquitin-conjugating enzyme]-L-cysteine + [acceptor protein]-L-lysine = [E2 ubiquitin-conjugating enzyme]-L-cysteine + N(6)-ubiquitinyl-[acceptor protein]-L-lysine.. Its pathway is protein modification; protein ubiquitination. Functionally, multidomain protein that acts as a key epigenetic regulator by bridging DNA methylation and chromatin modification. Specifically recognizes and binds hemimethylated DNA at replication forks via its YDG domain and recruits DNMT1 methyltransferase to ensure faithful propagation of the DNA methylation patterns through DNA replication. In addition to its role in maintenance of DNA methylation, also plays a key role in chromatin modification: through its tudor-like regions and PHD-type zinc fingers, specifically recognizes and binds histone H3 trimethylated at 'Lys-9' (H3K9me3) and unmethylated at 'Arg-2' (H3R2me0), respectively, and recruits chromatin proteins. Enriched in pericentric heterochromatin where it recruits different chromatin modifiers required for this chromatin replication. Also localizes to euchromatic regions where it negatively regulates transcription possibly by impacting DNA methylation and histone modifications. Has E3 ubiquitin-protein ligase activity by mediating the ubiquitination of target proteins such as histone H3 and PML. It is still unclear how E3 ubiquitin-protein ligase activity is related to its role in chromatin in vivo. Plays a role in DNA repair by cooperating with UHRF2 to ensure recruitment of FANCD2 to interstrand cross-links (ICLs) leading to FANCD2 activation. Acts as a critical player of proper spindle architecture by catalyzing the 'Lys-63'-linked ubiquitination of KIF11, thereby controlling KIF11 localization on the spindle. The polypeptide is E3 ubiquitin-protein ligase UHRF1 (UHRF1) (Homo sapiens (Human)).